Consider the following 802-residue polypeptide: Mitochondrial inner membrane m-AAA protease component AFG3L2 (802 aa).

The transit peptide at 1–38 directs the protein to the mitochondrion; sequence MAHRCLLLWSRGGCRRGLPPLLVPRGCLGPDRRPCLRT. Positions 39–66 are cleaved as a propeptide — removed in mature form; that stretch reads LYQYATVQTASSRRSLLRDVIAAYQRFC. The segment at 76 to 124 is disordered; the sequence is YFPNGKNGKKASEPKEAVGEKKEPQPSGPQPSGGAGGGGGKRRGKKEDS. The segment covering 85–99 has biased composition (basic and acidic residues); that stretch reads KASEPKEAVGEKKEP. Lysine 116 bears the N6-succinyllysine mark. The next 2 membrane-spanning stretches (helical) occupy residues 142-162 and 250-270; these read FRMYFLWTALFWGGVMIYFVF and GSFLLSMLPTVLIIAFLLYTI. The ATP site is built by valine 309, alanine 310, threonine 351, glycine 352, lysine 353, threonine 354, leucine 355, and histidine 489. Histidine 573 is a binding site for Zn(2+). Residue glutamate 574 is part of the active site. 2 residues coordinate Zn(2+): histidine 577 and aspartate 648. Residues 759–802 form a disordered region; the sequence is VEGTGSLDEDTSLPEGLQDWNKEREKEEKKEKEKEEPLNEKVVS. The span at 778–802 shows a compositional bias: basic and acidic residues; that stretch reads WNKEREKEEKKEKEKEEPLNEKVVS.

It in the N-terminal section; belongs to the AAA ATPase family. In the C-terminal section; belongs to the peptidase M41 family. As to quaternary structure, homohexamer. Forms heterohexamers with SPG7 and AFG3L1. The m-AAA protease is either composed of homohexamers of AFG3L2 or heterohexamers of AFG3L1, AFG3L2 and/or SPG7. Interacts with MAIP1. Interacts with DNAJC19. Interacts with PHB2. Zn(2+) serves as cofactor. Post-translationally, upon import into the mitochondrion, the N-terminal transit peptide is cleaved to generate an intermediate form which undergoes autocatalytic proteolytic processing to generate the proteolytically active mature form. Highly expressed in the cerebellar Purkinje cells.

It is found in the mitochondrion inner membrane. It carries out the reaction ATP + H2O = ADP + phosphate + H(+). In terms of biological role, catalytic component of the m-AAA protease, a protease that plays a key role in proteostasis of inner mitochondrial membrane proteins, and which is essential for axonal and neuron development. AFG3L2 possesses both ATPase and protease activities: the ATPase activity is required to unfold substrates, threading them into the internal proteolytic cavity for hydrolysis into small peptide fragments. The m-AAA protease carries out protein quality control in the inner membrane of the mitochondria by mediating degradation of mistranslated or misfolded polypeptides. The m-AAA protease complex also promotes the processing and maturation of mitochondrial proteins, such as MRPL32/bL32m, PINK1 and SP7. Mediates protein maturation of the mitochondrial ribosomal subunit MRPL32/bL32m by catalyzing the cleavage of the presequence of MRPL32/bL32m prior to assembly into the mitochondrial ribosome. Required for SPG7 maturation into its active mature form after SPG7 cleavage by mitochondrial-processing peptidase (MPP). Required for the maturation of PINK1 into its 52kDa mature form after its cleavage by mitochondrial-processing peptidase (MPP). Acts as a regulator of calcium in neurons by mediating degradation of SMDT1/EMRE before its assembly with the uniporter complex, limiting the availability of SMDT1/EMRE for MCU assembly and promoting efficient assembly of gatekeeper subunits with MCU. Promotes the proteolytic degradation of GHITM upon hyperpolarization of mitochondria: progressive GHITM degradation leads to respiratory complex I degradation and broad reshaping of the mitochondrial proteome by AFG3L2. Also acts as a regulator of mitochondrial glutathione homeostasis by mediating cleavage and degradation of SLC25A39. SLC25A39 cleavage is prevented when SLC25A39 binds iron-sulfur. Involved in the regulation of OMA1-dependent processing of OPA1. May act by mediating processing of OMA1 precursor, participating in OMA1 maturation. This Mus musculus (Mouse) protein is Mitochondrial inner membrane m-AAA protease component AFG3L2.